Reading from the N-terminus, the 354-residue chain is MLKEKLHPFIQRYNEINELLSSPEITQDIKKMTALSKEQSEIEPIVEKAKEYMNILEAIEENRSLIEDEELGELAKEELKELEPKKEQLEEEIKVLLISKDPNDEKDIYLEIRAGTGGEEAALFASDLFKAYARYAEKKGWRVEIVSSSESDSGGYKEIIAKIKGQGVYSRLKYEAGTHRVQRVPETESQGRIHTSAVTVAIMPEVDDVDVEINPNDLKIDVYRSSGHGGQSVNTTDSAVRITHIPTGIVVAMQDEKSQHKNKEKALKILKARIFEKRMREQQEALAKDRKEQVGSGDRSERIRTYNFPQNRVTDHRIGLTLYKLEEVMQGDLDQIIEPLIAHYQAQKIQEAGL.

Position 231 is an N5-methylglutamine (Gln-231). Residues 284 to 304 are compositionally biased toward basic and acidic residues; sequence EALAKDRKEQVGSGDRSERIR. Residues 284-308 are disordered; the sequence is EALAKDRKEQVGSGDRSERIRTYNF.

This sequence belongs to the prokaryotic/mitochondrial release factor family. In terms of processing, methylated by PrmC. Methylation increases the termination efficiency of RF1.

The protein localises to the cytoplasm. Functionally, peptide chain release factor 1 directs the termination of translation in response to the peptide chain termination codons UAG and UAA. This Nitratiruptor sp. (strain SB155-2) protein is Peptide chain release factor 1.